A 74-amino-acid polypeptide reads, in one-letter code: Apolipoprotein C-I, acidic form (74 aa).

A signal peptide spans 1–26 (MRLFLSLPVLVVVLSMVLEGPTPAQG).

This sequence belongs to the apolipoprotein C1 family.

The protein localises to the secreted. The protein is Apolipoprotein C-I, acidic form (APOC1A) of Colobus guereza (Mantled guereza).